A 736-amino-acid chain; its full sequence is 1,4-alpha-glucan branching enzyme GlgB (736 aa).

Catalysis depends on aspartate 415, which acts as the Nucleophile. Glutamate 470 (proton donor) is an active-site residue.

Belongs to the glycosyl hydrolase 13 family. GlgB subfamily. In terms of assembly, monomer.

The catalysed reaction is Transfers a segment of a (1-&gt;4)-alpha-D-glucan chain to a primary hydroxy group in a similar glucan chain.. The protein operates within glycan biosynthesis; glycogen biosynthesis. Catalyzes the formation of the alpha-1,6-glucosidic linkages in glycogen by scission of a 1,4-alpha-linked oligosaccharide from growing alpha-1,4-glucan chains and the subsequent attachment of the oligosaccharide to the alpha-1,6 position. The sequence is that of 1,4-alpha-glucan branching enzyme GlgB from Burkholderia orbicola (strain AU 1054).